Here is a 588-residue protein sequence, read N- to C-terminus: 2-succinyl-5-enolpyruvyl-6-hydroxy-3-cyclohexene-1-carboxylate synthase (588 aa).

The tract at residues 1–22 is disordered; sequence MTTTGSLPAQPSSTSPRTGNPS.

Belongs to the TPP enzyme family. MenD subfamily. As to quaternary structure, homodimer. Mg(2+) is required as a cofactor. The cofactor is Mn(2+). Thiamine diphosphate serves as cofactor.

The catalysed reaction is isochorismate + 2-oxoglutarate + H(+) = 5-enolpyruvoyl-6-hydroxy-2-succinyl-cyclohex-3-ene-1-carboxylate + CO2. Its pathway is quinol/quinone metabolism; 1,4-dihydroxy-2-naphthoate biosynthesis; 1,4-dihydroxy-2-naphthoate from chorismate: step 2/7. It participates in quinol/quinone metabolism; menaquinone biosynthesis. Functionally, catalyzes the thiamine diphosphate-dependent decarboxylation of 2-oxoglutarate and the subsequent addition of the resulting succinic semialdehyde-thiamine pyrophosphate anion to isochorismate to yield 2-succinyl-5-enolpyruvyl-6-hydroxy-3-cyclohexene-1-carboxylate (SEPHCHC). This chain is 2-succinyl-5-enolpyruvyl-6-hydroxy-3-cyclohexene-1-carboxylate synthase, found in Clavibacter michiganensis subsp. michiganensis (strain NCPPB 382).